Reading from the N-terminus, the 306-residue chain is tRNA dimethylallyltransferase (306 aa).

An ATP-binding site is contributed by 11-18 (APTAAGKT). 13-18 (TAAGKT) provides a ligand contact to substrate.

It belongs to the IPP transferase family. In terms of assembly, monomer. Mg(2+) serves as cofactor.

The catalysed reaction is adenosine(37) in tRNA + dimethylallyl diphosphate = N(6)-dimethylallyladenosine(37) in tRNA + diphosphate. Catalyzes the transfer of a dimethylallyl group onto the adenine at position 37 in tRNAs that read codons beginning with uridine, leading to the formation of N6-(dimethylallyl)adenosine (i(6)A). This chain is tRNA dimethylallyltransferase, found in Deinococcus radiodurans (strain ATCC 13939 / DSM 20539 / JCM 16871 / CCUG 27074 / LMG 4051 / NBRC 15346 / NCIMB 9279 / VKM B-1422 / R1).